The chain runs to 540 residues: Putative BTB/POZ domain-containing protein R224 (540 aa).

A BTB domain is found at 16-88 (TDLELTLIDE…FYKNPIKYKN (73 aa)). Residues 356–376 (IFVSLLNDIIFVLSSINMYFI) traverse the membrane as a helical segment.

It belongs to the mimivirus BTB/WD family.

It is found in the membrane. This Acanthamoeba polyphaga (Amoeba) protein is Putative BTB/POZ domain-containing protein R224.